The sequence spans 360 residues: Phosphoserine aminotransferase (360 aa).

Arginine 41 serves as a coordination point for L-glutamate. Pyridoxal 5'-phosphate-binding residues include tryptophan 101, threonine 152, aspartate 172, and glutamine 195. At lysine 196 the chain carries N6-(pyridoxal phosphate)lysine. 237-238 serves as a coordination point for pyridoxal 5'-phosphate; sequence NT.

It belongs to the class-V pyridoxal-phosphate-dependent aminotransferase family. SerC subfamily. Homodimer. Requires pyridoxal 5'-phosphate as cofactor.

It localises to the cytoplasm. It carries out the reaction O-phospho-L-serine + 2-oxoglutarate = 3-phosphooxypyruvate + L-glutamate. It catalyses the reaction 4-(phosphooxy)-L-threonine + 2-oxoglutarate = (R)-3-hydroxy-2-oxo-4-phosphooxybutanoate + L-glutamate. It participates in amino-acid biosynthesis; L-serine biosynthesis; L-serine from 3-phospho-D-glycerate: step 2/3. It functions in the pathway cofactor biosynthesis; pyridoxine 5'-phosphate biosynthesis; pyridoxine 5'-phosphate from D-erythrose 4-phosphate: step 3/5. In terms of biological role, catalyzes the reversible conversion of 3-phosphohydroxypyruvate to phosphoserine and of 3-hydroxy-2-oxo-4-phosphonooxybutanoate to phosphohydroxythreonine. The chain is Phosphoserine aminotransferase from Burkholderia cenocepacia (strain ATCC BAA-245 / DSM 16553 / LMG 16656 / NCTC 13227 / J2315 / CF5610) (Burkholderia cepacia (strain J2315)).